Consider the following 140-residue polypeptide: MNFLRQSFGITKQLASQAIQCSYETAVRGMASLQQMHRSGPHIKTRPPRQPLDGKPFAKGVVLKTLIKKPKKPNSANRKCVLVRLSTGKEMVAYIPGIGHNLQEHNIVLCRVGRLQDVPGVKLKAVRGVYDLAHVVKKSQ.

Residues 1 to 30 (MNFLRQSFGITKQLASQAIQCSYETAVRGM) constitute a mitochondrion transit peptide.

It belongs to the universal ribosomal protein uS12 family.

The protein resides in the mitochondrion. This chain is Small ribosomal subunit protein uS12m (tko), found in Drosophila melanogaster (Fruit fly).